We begin with the raw amino-acid sequence, 489 residues long: Actin-related protein 4 (489 aa).

Residues 323–379 are disordered; that stretch reads KRTKPSGVNKSDKKVTPTEEKEQEAVSKSTSPAANSADTPNETGKRPLEEEKPPKEN. Basic and acidic residues predominate over residues 332–347; it reads KSDKKVTPTEEKEQEA. A compositionally biased stretch (polar residues) spans 348–364; the sequence is VSKSTSPAANSADTPNE. The residue at position 349 (Ser349) is a Phosphoserine. Residues 365 to 379 show a composition bias toward basic and acidic residues; that stretch reads TGKRPLEEEKPPKEN.

It belongs to the actin family. ARP4 subfamily. Component of the NuA4 histone acetyltransferase complex composed of at least ACT1, ARP4, EAF3, EAF5, EAF6, EAF7, EPL1, ESA1, SWC4, TRA1, VID21, YAF9 and YNG2. Component of the chromatin-remodeling INO80 complex, at least composed of ARP4, ARP5, ARP8, RVB1, RVB2, TAF14, NHP10, IES1, IES3, IES4, IES6, ACT1, IES2, IES5 and INO80. Component of the SWR1 chromatin remodeling complex composed of at least ACT1, ARP4, RVB1, RVB2, ARP6, YAF9, VPS71, VPS72, SWC3, SWC4, SWC5, SWC7 and SWR1, and perhaps BDF1. Interacts with histones H4 (HHF1 and HHF2), H3 (HHT1 and HHT2) and H2A (HTA1 and HTA2).

The protein localises to the nucleus. Functionally, chromatin interaction component of the NuA4 histone acetyltransferase complex which is involved in transcriptional activation of selected genes principally by acetylation of nucleosomal histone H4 and H2A. The NuA4 complex is also involved in DNA repair. ARP4 recognizes H2AS128ph (gamma-H2A) and is required for NuA4 complex integrity. Component of the SWR1 complex which mediates the ATP-dependent exchange of histone H2A for the H2A variant HZT1 leading to transcriptional regulation of selected genes by chromatin remodeling. Component of the INO80 complex which remodels chromatin by shifting nucleosomes. Its ability to induce transcription of some phosphate-responsive genes is modulated by inositol polyphosphates. The INO80 complex is involved in DNA repair by associating to gamma-H2A as a response to DNA damage. The protein is Actin-related protein 4 (ARP4) of Saccharomyces cerevisiae (strain ATCC 204508 / S288c) (Baker's yeast).